A 404-amino-acid polypeptide reads, in one-letter code: G1/S-specific cyclin-E2 (404 aa).

The tract at residues 1-45 is disordered; the sequence is MSRRSSRLQAKQQPQASQTDSPQEAQIIQAKKRKTAQDVKKRKEE. Residues 7-26 show a composition bias toward polar residues; it reads RLQAKQQPQASQTDSPQEAQ. At Ser21 the chain carries Phosphoserine. Over residues 35–45 the composition is skewed to basic and acidic residues; sequence TAQDVKKRKEE. The residue at position 348 (Lys348) is an N6-lactoyllysine. Ser383 bears the Phosphoserine mark. Thr392 is modified (phosphothreonine).

The protein belongs to the cyclin family. Cyclin E subfamily. In terms of assembly, interacts with the CDK2 (in vivo) and CDK3 (in vitro) protein kinases to form a serine/threonine kinase holoenzyme complex. The cyclin subunit imparts substrate specificity to the complex. In terms of processing, phosphorylation by CDK2 triggers its release from CDK2 and degradation via the ubiquitin proteasome pathway. Lactylated at Lys-348. Delactylated by SIRT3.

It localises to the nucleus. Essential for the control of the cell cycle at the late G1 and early S phase. This is G1/S-specific cyclin-E2 (CCNE2) from Bos taurus (Bovine).